Reading from the N-terminus, the 340-residue chain is DNA-directed RNA polymerase subunit alpha (340 aa).

Positions 1–238 (MVDPIVTKNW…EQLSIFINFD (238 aa)) are alpha N-terminal domain (alpha-NTD). Residues 255-340 (LNENLFRSVD…AAPQGGAPKV (86 aa)) are alpha C-terminal domain (alpha-CTD).

This sequence belongs to the RNA polymerase alpha chain family. As to quaternary structure, homodimer. The RNAP catalytic core consists of 2 alpha, 1 beta, 1 beta' and 1 omega subunit. When a sigma factor is associated with the core the holoenzyme is formed, which can initiate transcription.

It carries out the reaction RNA(n) + a ribonucleoside 5'-triphosphate = RNA(n+1) + diphosphate. Its function is as follows. DNA-dependent RNA polymerase catalyzes the transcription of DNA into RNA using the four ribonucleoside triphosphates as substrates. The sequence is that of DNA-directed RNA polymerase subunit alpha from Anaeromyxobacter dehalogenans (strain 2CP-1 / ATCC BAA-258).